The primary structure comprises 142 residues: ATP synthase epsilon chain (142 aa).

Belongs to the ATPase epsilon chain family. As to quaternary structure, F-type ATPases have 2 components, CF(1) - the catalytic core - and CF(0) - the membrane proton channel. CF(1) has five subunits: alpha(3), beta(3), gamma(1), delta(1), epsilon(1). CF(0) has three main subunits: a, b and c.

It is found in the cell inner membrane. Its function is as follows. Produces ATP from ADP in the presence of a proton gradient across the membrane. This chain is ATP synthase epsilon chain, found in Shewanella frigidimarina (strain NCIMB 400).